The primary structure comprises 202 residues: MNILNRLGLGSSGQTNMDPSPIAQGNDDDTPAPGNQFAQFGAGCFWGVELAFQRVPGVTQTEAGYTQGTVDNPSYGDVCSGTTGHSEVVRVQYDLNDCTYESLLDLFWSRHDPTTLNRQGNDVGTQYRSGIYFYTPEQEKLARESLERHQQQMERKIMTEILPAKKFYRAEEHHQQYLSKGGRFGQGQSTAKGCNDPIRCYG.

Residues 1–34 form a disordered region; that stretch reads MNILNRLGLGSSGQTNMDPSPIAQGNDDDTPAPG. The residue at position 189 (S189) is a Phosphoserine.

Belongs to the MsrA Met sulfoxide reductase family. Expressed in rosette and cauline leaves, and at lower levels in roots, stems and flowers (at protein level).

Its subcellular location is the cytoplasm. The protein resides in the cytosol. It carries out the reaction L-methionyl-[protein] + [thioredoxin]-disulfide + H2O = L-methionyl-(S)-S-oxide-[protein] + [thioredoxin]-dithiol. It catalyses the reaction [thioredoxin]-disulfide + L-methionine + H2O = L-methionine (S)-S-oxide + [thioredoxin]-dithiol. Catalyzes the reduction of methionine sulfoxide (MetSO) to methionine in proteins. Plays a protective role against oxidative stress by restoring activity to proteins that have been inactivated by methionine oxidation. May prevent cellular oxidative damage due to light exposure. MSRA family specifically reduces the MetSO S-enantiomer. In Arabidopsis thaliana (Mouse-ear cress), this protein is Peptide methionine sulfoxide reductase A3 (MSRA3).